The following is a 457-amino-acid chain: L-asparaginase-like protein GL17509 (457 aa).

The first 20 residues, 1 to 20 (MRYLCRAQLLSLLLLPLLKA), serve as a signal peptide directing secretion. 3 disulfides stabilise this stretch: Cys72–Cys78, Cys172–Cys188, and Cys327–Cys354.

Belongs to the Ntn-hydrolase family.

This Drosophila persimilis (Fruit fly) protein is L-asparaginase-like protein GL17509.